The sequence spans 599 residues: Putative sensor histidine kinase NtrY-like (599 aa).

The next 4 membrane-spanning stretches (helical) occupy residues 17–37 (VLIF…FYVI), 44–64 (FSTI…LGVL), 85–105 (IVIA…VFSV), and 285–305 (IMFI…GVIF). One can recognise an HAMP domain in the interval 307–361 (AKIVKPIKKLVTATDKVKDGDLTVQVPENEVDKDEIGTLYAAFNRMIKQLSRQQR). Residues 378-589 (KVAHEIKNPL…IIDIKFDLKK (212 aa)) form the Histidine kinase domain. His381 carries the post-translational modification Phosphohistidine; by autocatalysis.

Its subcellular location is the cell membrane. It carries out the reaction ATP + protein L-histidine = ADP + protein N-phospho-L-histidine.. Its function is as follows. Member of the two-component regulatory system RF_0427/RF_0895. This Rickettsia felis (strain ATCC VR-1525 / URRWXCal2) (Rickettsia azadi) protein is Putative sensor histidine kinase NtrY-like.